We begin with the raw amino-acid sequence, 468 residues long: Beta-monoglucosyldiacylglycerol synthase (468 aa).

Helical transmembrane passes span 51-71, 72-92, 361-381, and 387-407; these read AALVLTIVWSGTIALHLVSWG, SIFILGLTTVLGIHALGVVFA, FMLTMYILPTAAIPDLLMAVV, and MLGPVTGLSVTMSVVGMFAGL.

It belongs to the glycosyltransferase 2 family. The cofactor is Mg(2+).

The protein resides in the membrane. It carries out the reaction a 1,2-diacyl-sn-glycerol + UDP-alpha-D-glucose = a 1,2-diacyl-3-O-(beta-D-glucopyranosyl)-sn-glycerol + UDP + H(+). In terms of biological role, glucosyltransferase involved in the biosynthesis of the non-bilayer-forming membrane lipid beta-monoglucosyldiacylglycerol which contributes to regulate the properties and stability of the membrane. Catalyzes the transfer of a glucosyl residue from UDP-Glc to diacylglycerol (DAG) acceptor to form the corresponding beta-glucosyl-DAG (1,2-diacyl-3-O-(beta-D-glucopyranosyl)-sn-glycerol). It can only use UDP-Glc as sugar donor. This Trichormus variabilis (strain ATCC 29413 / PCC 7937) (Anabaena variabilis) protein is Beta-monoglucosyldiacylglycerol synthase.